The primary structure comprises 244 residues: LexA repressor (244 aa).

The tract at residues 1–24 (MSDSSDTTVDGASDGASDGASGAD) is disordered. Positions 10–24 (DGASDGASDGASGAD) are enriched in low complexity. The segment at residues 58 to 78 (IREIGDAVGLTSTSSVAHQLR) is a DNA-binding region (H-T-H motif). Active-site for autocatalytic cleavage activity residues include Ser-168 and Lys-205.

Belongs to the peptidase S24 family. In terms of assembly, homodimer.

The enzyme catalyses Hydrolysis of Ala-|-Gly bond in repressor LexA.. Its function is as follows. Represses a number of genes involved in the response to DNA damage (SOS response), including recA and lexA. In the presence of single-stranded DNA, RecA interacts with LexA causing an autocatalytic cleavage which disrupts the DNA-binding part of LexA, leading to derepression of the SOS regulon and eventually DNA repair. The protein is LexA repressor of Mycobacterium ulcerans (strain Agy99).